A 120-amino-acid polypeptide reads, in one-letter code: Internal scaffolding protein B (120 aa).

A compositionally biased stretch (polar residues) spans 1-23; it reads MEQLTKNQAVATSQEAVQNQNEP. The segment at 1–64 is disordered; sequence MEQLTKNQAV…PDIEAERKKR (64 aa). Basic and acidic residues-rich tracts occupy residues 24–36 and 48–64; these read QLRDENAHNDKSV and LRRDAVQPDIEAERKKR.

It belongs to the microviridae B protein family. In terms of assembly, component of the procapsid complex composed of 60 copies of the internally located B, 240 copies of the external scaffolding protein D, 60 copies of each of the viral structural proteins F and G proteins, and 12 copies of H. Post-translationally, the proteolytic cleavage of the internal scaffolding protein B releases the scaffold protein in order to continue virion assembly.

The protein resides in the host cytoplasm. Functionally, participates in the assembly of the viral procapsid in the cytoplasm. Forms first a 12S pre-assembly complex with protein H, and F and G pentamers, then twelve 12S complexes are joined by the D protein to form the procapsid. Internal scaffold protein B is released from the procapsid upon genome packaging. Autoproteolytic activity cleaves protein B and probably facilitates its removal through the pores of the procapsid. The sequence is that of Internal scaffolding protein B (B) from Enterobacteria phage phiX174 (Isolate Sanger).